We begin with the raw amino-acid sequence, 336 residues long: Terephthalate 1,2-dioxygenase, reductase component 2 (336 aa).

Residues 3-91 (HQIHIHDSDI…DIRIHPSSFR (89 aa)) enclose the 2Fe-2S ferredoxin-type domain. [2Fe-2S] cluster contacts are provided by C37, C42, C45, and C75. An FAD-binding FR-type domain is found at 98-197 (RKRFTAKVYS…ELPFGSIALK (100 aa)).

Monomer. Part of a multicomponent enzyme system composed of a reductase (TphA1I or TphA1II) and a two-subunit oxygenase component (TphA2I or TphA2II and TphA3I or TphA3II). Requires FAD as cofactor. It depends on [2Fe-2S] cluster as a cofactor.

It catalyses the reaction terephthalate + NADH + O2 + H(+) = (3S,4R)-3,4-dihydroxycyclohexa-1,5-diene-1,4-dicarboxylate + NAD(+). Its function is as follows. Component of the terephthalate 1,2-dioxygenase multicomponent enzyme system which catalyzes the dioxygenation of terephthalate (TER/TPA) to 1,2-dihydroxy-3,5-cyclohexadiene-1,4-dicarboxylic acid (DCD). TphA1 probably reduces TphA2A3. It can also use 2,5-dicarboxypyridine (PDC) and 1,4-napthalenedicarboxylic acid (NDC) as substrates, and preferentially uses NADPH which is the physiological electron donor. The sequence is that of Terephthalate 1,2-dioxygenase, reductase component 2 (tphA1II) from Comamonas sp.